The sequence spans 506 residues: Maturase K (506 aa).

This sequence belongs to the intron maturase 2 family. MatK subfamily.

Its subcellular location is the plastid. It localises to the chloroplast. In terms of biological role, usually encoded in the trnK tRNA gene intron. Probably assists in splicing its own and other chloroplast group II introns. This Olea europaea (Common olive) protein is Maturase K.